Here is a 302-residue protein sequence, read N- to C-terminus: tRNA pseudouridine synthase B (302 aa).

Aspartate 42 (nucleophile) is an active-site residue.

It belongs to the pseudouridine synthase TruB family. Type 1 subfamily.

It catalyses the reaction uridine(55) in tRNA = pseudouridine(55) in tRNA. Responsible for synthesis of pseudouridine from uracil-55 in the psi GC loop of transfer RNAs. In Leifsonia xyli subsp. xyli (strain CTCB07), this protein is tRNA pseudouridine synthase B.